Here is a 120-residue protein sequence, read N- to C-terminus: Phosphoribosyl-ATP pyrophosphatase (120 aa).

Belongs to the PRA-PH family.

It localises to the cytoplasm. The catalysed reaction is 1-(5-phospho-beta-D-ribosyl)-ATP + H2O = 1-(5-phospho-beta-D-ribosyl)-5'-AMP + diphosphate + H(+). The protein operates within amino-acid biosynthesis; L-histidine biosynthesis; L-histidine from 5-phospho-alpha-D-ribose 1-diphosphate: step 2/9. The chain is Phosphoribosyl-ATP pyrophosphatase from Methylibium petroleiphilum (strain ATCC BAA-1232 / LMG 22953 / PM1).